The following is a 295-amino-acid chain: Ethanolamine ammonia-lyase small subunit (295 aa).

3 residues coordinate adenosylcob(III)alamin: Val207, Glu228, and Cys258.

This sequence belongs to the EutC family. As to quaternary structure, the basic unit is a heterodimer which dimerizes to form tetramers. The heterotetramers trimerize; 6 large subunits form a core ring with 6 small subunits projecting outwards. Adenosylcob(III)alamin is required as a cofactor.

Its subcellular location is the bacterial microcompartment. The enzyme catalyses ethanolamine = acetaldehyde + NH4(+). It participates in amine and polyamine degradation; ethanolamine degradation. Its function is as follows. Catalyzes the deamination of various vicinal amino-alcohols to oxo compounds. Allows this organism to utilize ethanolamine as the sole source of nitrogen and carbon in the presence of external vitamin B12. This Escherichia coli O157:H7 protein is Ethanolamine ammonia-lyase small subunit.